We begin with the raw amino-acid sequence, 54 residues long: MLYYALVFFIIAIVAAVFGFSGIAAGAVGIAKILFVVFLIMAIATFVVNLLRGR.

2 helical membrane passes run 5 to 25 and 28 to 48; these read ALVF…GIAA and VGIA…TFVV.

This sequence belongs to the UPF0391 family.

It localises to the cell membrane. This chain is UPF0391 membrane protein Tbd_2238, found in Thiobacillus denitrificans (strain ATCC 25259 / T1).